A 932-amino-acid chain; its full sequence is DNA mismatch repair protein MutS (932 aa).

615–622 provides a ligand contact to ATP; the sequence is GPNMAGKS.

Belongs to the DNA mismatch repair MutS family.

In terms of biological role, this protein is involved in the repair of mismatches in DNA. It is possible that it carries out the mismatch recognition step. This protein has a weak ATPase activity. The protein is DNA mismatch repair protein MutS of Clostridium botulinum (strain 657 / Type Ba4).